We begin with the raw amino-acid sequence, 560 residues long: DNA ligase B (560 aa).

Lys-124 serves as the catalytic N6-AMP-lysine intermediate.

The protein belongs to the NAD-dependent DNA ligase family. LigB subfamily.

The enzyme catalyses NAD(+) + (deoxyribonucleotide)n-3'-hydroxyl + 5'-phospho-(deoxyribonucleotide)m = (deoxyribonucleotide)n+m + AMP + beta-nicotinamide D-nucleotide.. Functionally, catalyzes the formation of phosphodiester linkages between 5'-phosphoryl and 3'-hydroxyl groups in double-stranded DNA using NAD as a coenzyme and as the energy source for the reaction. The sequence is that of DNA ligase B from Escherichia coli O17:K52:H18 (strain UMN026 / ExPEC).